Consider the following 171-residue polypeptide: tRNA-splicing endonuclease (171 aa).

Active-site residues include tyrosine 110, histidine 117, and lysine 148.

This sequence belongs to the tRNA-intron endonuclease family. Archaeal short subfamily. In terms of assembly, homotetramer; although the tetramer contains four active sites, only two participate in the cleavage. Therefore, it should be considered as a dimer of dimers.

The catalysed reaction is pretRNA = a 3'-half-tRNA molecule with a 5'-OH end + a 5'-half-tRNA molecule with a 2',3'-cyclic phosphate end + an intron with a 2',3'-cyclic phosphate and a 5'-hydroxyl terminus.. Endonuclease that removes tRNA introns. Cleaves pre-tRNA at the 5'- and 3'-splice sites to release the intron. The products are an intron and two tRNA half-molecules bearing 2',3' cyclic phosphate and 5'-OH termini. Recognizes a pseudosymmetric substrate in which 2 bulged loops of 3 bases are separated by a stem of 4 bp. This is tRNA-splicing endonuclease from Thermococcus onnurineus (strain NA1).